A 501-amino-acid chain; its full sequence is Probable cysteine desulfurase, mitochondrial (501 aa).

Pyridoxal 5'-phosphate is bound by residues 172–173 (AT), Asn252, Gln280, and 300–302 (SAH). N6-(pyridoxal phosphate)lysine is present on Lys303. Thr340 is a pyridoxal 5'-phosphate binding site. Cys425 (cysteine persulfide intermediate) is an active-site residue. Cys425 contacts [2Fe-2S] cluster.

It belongs to the class-V pyridoxal-phosphate-dependent aminotransferase family. NifS/IscS subfamily. It depends on pyridoxal 5'-phosphate as a cofactor.

The protein resides in the mitochondrion. The enzyme catalyses (sulfur carrier)-H + L-cysteine = (sulfur carrier)-SH + L-alanine. In terms of biological role, catalyzes the removal of elemental sulfur from cysteine to produce alanine. It supplies the inorganic sulfur for iron-sulfur (Fe-S) clusters. Plays a role in both tRNA-processing and mitochondrial metabolism. Involved in the 2-thio-modification of both 5-carboxymethylaminomethyl-2-thiouridine in mitochondrial tRNAs and 5-methoxycarbonylmethyl-2-thiouridine (mcm5s2U) in cytoplasmic tRNAs. This Schizosaccharomyces pombe (strain 972 / ATCC 24843) (Fission yeast) protein is Probable cysteine desulfurase, mitochondrial.